Reading from the N-terminus, the 210-residue chain is Thymidylate kinase (210 aa).

Gly9–Ser16 lines the ATP pocket.

This sequence belongs to the thymidylate kinase family.

The enzyme catalyses dTMP + ATP = dTDP + ADP. Functionally, phosphorylation of dTMP to form dTDP in both de novo and salvage pathways of dTTP synthesis. This is Thymidylate kinase from Aliivibrio fischeri (strain ATCC 700601 / ES114) (Vibrio fischeri).